Reading from the N-terminus, the 389-residue chain is Succinate--CoA ligase [ADP-forming] subunit beta (389 aa).

Positions 9–236 (KELFAKHEVP…KDATDPLELK (228 aa)) constitute an ATP-grasp domain. ATP is bound by residues K45, 52–54 (GRG), S94, and E99. Positions 191 and 205 each coordinate Mg(2+). Residues N256 and 318–320 (GIT) contribute to the substrate site.

The protein belongs to the succinate/malate CoA ligase beta subunit family. As to quaternary structure, heterotetramer of two alpha and two beta subunits. The cofactor is Mg(2+).

It catalyses the reaction succinate + ATP + CoA = succinyl-CoA + ADP + phosphate. The enzyme catalyses GTP + succinate + CoA = succinyl-CoA + GDP + phosphate. It functions in the pathway carbohydrate metabolism; tricarboxylic acid cycle; succinate from succinyl-CoA (ligase route): step 1/1. Functionally, succinyl-CoA synthetase functions in the citric acid cycle (TCA), coupling the hydrolysis of succinyl-CoA to the synthesis of either ATP or GTP and thus represents the only step of substrate-level phosphorylation in the TCA. The beta subunit provides nucleotide specificity of the enzyme and binds the substrate succinate, while the binding sites for coenzyme A and phosphate are found in the alpha subunit. This is Succinate--CoA ligase [ADP-forming] subunit beta from Rhodococcus opacus (strain B4).